Consider the following 313-residue polypeptide: Ribosomal RNA small subunit methyltransferase H (313 aa).

S-adenosyl-L-methionine is bound by residues 35 to 37, Asp55, Phe79, Asp100, and Gln107; that span reads GGH.

The protein belongs to the methyltransferase superfamily. RsmH family.

It is found in the cytoplasm. The catalysed reaction is cytidine(1402) in 16S rRNA + S-adenosyl-L-methionine = N(4)-methylcytidine(1402) in 16S rRNA + S-adenosyl-L-homocysteine + H(+). Functionally, specifically methylates the N4 position of cytidine in position 1402 (C1402) of 16S rRNA. In Burkholderia orbicola (strain AU 1054), this protein is Ribosomal RNA small subunit methyltransferase H.